Here is a 103-residue protein sequence, read N- to C-terminus: MTHDHNHDHEHEERELITLVDEQGNETLFEILLTIDGKEEFGKNYVLLIPANAEEDENGEVEIQAYSFTENEDGTEGDLQPIPEDSDAEWDMIEEVFNSFMEE.

Belongs to the UPF0473 family.

The sequence is that of UPF0473 protein SSA_2239 from Streptococcus sanguinis (strain SK36).